The following is a 147-amino-acid chain: Microtubule-associated protein 1 light chain 3 gamma (147 aa).

Residues Ser93 and Ser96 each carry the phosphoserine; by TBK1 modification. Gly126 is lipidated: Phosphatidylethanolamine amidated glycine; alternate. A lipid anchor (Phosphatidylserine amidated glycine; alternate) is attached at Gly126. A propeptide spans 127-147 (CLESAAPRDGSSLEDRPCNPL) (removed in mature form).

The protein belongs to the ATG8 family. As to quaternary structure, 3 different light chains, LC1 (a cleavage product of MAP1B), LC2 (a cleavage product of MAP1A) and LC3 (produced by one of the MAP1LC3 genes), can associate with the MAP1A or MAP1B heavy chains. Interacts with TP53INP1 and TP53INP2. Interacts with CALCOCO2. Interacts with TECPR2. Interacts with TBC1D5. Found in a complex with UBQLN1 and UBQLN2. Interacts with UBQLN4 (via STI1 1 and 2 domains). Interacts with UBQLN1 in the presence of UBQLN4. Interacts with TRIM5. Interacts with ATG13. Interacts with MEFV and TRIM21. Interacts with WDR81; recruits MAP1LC3C to ubiquitinated protein aggregates in the aggrephagy process. Interacts with MOAP1 (via LIR motif). Interacts with reticulophagy regulators RETREG1, RETREG2 and RETREG3. Interacts with TAX1BP1. Interacts with IRGM. Interacts with SPART. In terms of processing, the precursor molecule is cleaved by ATG4 (ATG4A, ATG4B, ATG4C or ATG4D) to expose the glycine at the C-terminus and form the cytosolic form, LC3-I. The processed form is then activated by APG7L/ATG7, transferred to ATG3 and conjugated to phosphatidylethanolamine (PE) phospholipid to form the membrane-bound form, LC3-II. During non-canonical autophagy, the processed form is conjugated to phosphatidylserine (PS) phospholipid. ATG4 proteins also mediate the delipidation of PE-conjugated forms. In addition, ATG4B and ATG4D mediate delipidation of ATG8 proteins conjugated to PS during non-canonical autophagy. Post-translationally, (Microbial infection) The Legionella effector RavZ is a deconjugating enzyme that hydrolyzes the amide bond between the C-terminal glycine residue and an adjacent aromatic residue in ATG8 proteins conjugated to phosphatidylethanolamine (PE), producing an ATG8 protein that is resistant to reconjugation by the host machinery due to the cleavage of the reactive C-terminal glycine. RavZ is also able to mediate delipidation of ATG8 proteins conjugated to phosphatidylserine (PS). Phosphorylation at Ser-96 and Ser-98 by TBK1 prevents interaction with ATG4 (ATG4A, ATG4B, ATG4C or ATG4D). Phosphorylation by TBK1 on autophagosomes prevents their delipidation by ATG4 and premature removal from nascent autophagosomes. As to expression, most abundant in placenta, lung and ovary.

The protein resides in the cytoplasmic vesicle. The protein localises to the autophagosome membrane. Its subcellular location is the endomembrane system. It localises to the cytoplasm. It is found in the cytoskeleton. Its function is as follows. Ubiquitin-like modifier that plays a crucial role in antibacterial autophagy (xenophagy) through the selective binding of CALCOCO2. Recruits all ATG8 family members to infecting bacteria such as S.typhimurium. May also play a role in aggrephagy, the macroautophagic degradation of ubiquitinated and aggregated proteins. The chain is Microtubule-associated protein 1 light chain 3 gamma (MAP1LC3C) from Homo sapiens (Human).